Reading from the N-terminus, the 125-residue chain is Type-4 ice-structuring protein (125 aa).

An N-terminal signal peptide occupies residues 1–20; the sequence is MKYTLIAAIVVLALAQGTLA.

It belongs to the apolipoprotein A1/A4/E family.

It localises to the secreted. Its function is as follows. Antifreeze proteins lower the blood freezing point. The chain is Type-4 ice-structuring protein from Gadus morhua (Atlantic cod).